A 383-amino-acid polypeptide reads, in one-letter code: MEESRESPAEHGYYMPAEWDSHAQTWIGWPERQDNWRHNALPAQRVFADVAKAISKFEPVTVCASPAQWENARKQLPEDIRVVEMSMNDSWFRDSGPTFIVRKRPVKLSSLNRNIAGIDWNFNAWGGANDGCYNDWSHDLLVSRKILALERIPRFQHSMILEGGSIHVDGEGTCLVTEECLLNKNRNPHMSKEQIEEELKKYLGVQSFIWLPRGLYGDEDTNGHIDNMCCFARPGVVLLSWTDDETDPQYERSVEALSVLSNSIDARGRKIQVIKLYIPEPLYMTEEESSGITQDGEAIPRLAGTRLAASYVNFYIANGGIIAPQFGDPIRDKEAIRVLSDTFPHHSVVGIENAREIVLAGGNIHCITQQQPAEPTSVAENGH.

The agmatine site is built by aspartate 220 and aspartate 226. Cysteine 366 (amidino-cysteine intermediate) is an active-site residue.

The protein belongs to the agmatine deiminase family. As to quaternary structure, forms homodimers.

It carries out the reaction agmatine + H2O = N-carbamoylputrescine + NH4(+). Its pathway is amine and polyamine biosynthesis; putrescine biosynthesis via agmatine pathway; N-carbamoylputrescine from agmatine: step 1/1. Its activity is regulated as follows. Inhibited by N-ethylmaleimide and iodoacetamide. Its function is as follows. Mediates the hydrolysis of agmatine into N-carbamoylputrescine in the arginine decarboxylase (ADC) pathway of putrescine biosynthesis, a basic polyamine. The polypeptide is Agmatine deiminase (AIH) (Arabidopsis thaliana (Mouse-ear cress)).